A 172-amino-acid chain; its full sequence is ATP synthase subunit b (172 aa).

A helical transmembrane segment spans residues 27–47; it reads LAIVIFGLYKFLPPFVGGILE.

Belongs to the ATPase B chain family. F-type ATPases have 2 components, F(1) - the catalytic core - and F(0) - the membrane proton channel. F(1) has five subunits: alpha(3), beta(3), gamma(1), delta(1), epsilon(1). F(0) has four main subunits: a(1), b(1), b'(1) and c(10-14). The alpha and beta chains form an alternating ring which encloses part of the gamma chain. F(1) is attached to F(0) by a central stalk formed by the gamma and epsilon chains, while a peripheral stalk is formed by the delta, b and b' chains.

It is found in the cellular thylakoid membrane. F(1)F(0) ATP synthase produces ATP from ADP in the presence of a proton or sodium gradient. F-type ATPases consist of two structural domains, F(1) containing the extramembraneous catalytic core and F(0) containing the membrane proton channel, linked together by a central stalk and a peripheral stalk. During catalysis, ATP synthesis in the catalytic domain of F(1) is coupled via a rotary mechanism of the central stalk subunits to proton translocation. In terms of biological role, component of the F(0) channel, it forms part of the peripheral stalk, linking F(1) to F(0). The chain is ATP synthase subunit b from Prochlorococcus marinus (strain MIT 9303).